The chain runs to 83 residues: Probable insulin-like peptide alpha-type 2 (83 aa).

Residues Met-1–Asp-21 form the signal peptide. Cystine bridges form between Cys-32–Cys-66, Cys-44–Cys-79, and Cys-54–Cys-80.

This sequence belongs to the insulin family.

Its subcellular location is the secreted. The chain is Probable insulin-like peptide alpha-type 2 (ins-22) from Caenorhabditis elegans.